A 242-amino-acid polypeptide reads, in one-letter code: Ribonuclease 3 2 (242 aa).

The RNase III domain maps to 12 to 137 (LESLVRKLGL…VLGALYLSTS (126 aa)). Position 51 (Glu51) interacts with Mg(2+). Asp55 is a catalytic residue. Residues Asp123 and Glu126 each coordinate Mg(2+). The active site involves Glu126. The DRBM domain occupies 165–235 (NYKAALQEWT…AKVAFLAITP (71 aa)).

It belongs to the ribonuclease III family. Homodimer. The cofactor is Mg(2+).

It is found in the cytoplasm. It carries out the reaction Endonucleolytic cleavage to 5'-phosphomonoester.. Its function is as follows. Digests double-stranded RNA. Involved in the processing of primary rRNA transcript to yield the immediate precursors to the large and small rRNAs (23S and 16S). Processes some mRNAs, and tRNAs when they are encoded in the rRNA operon. Processes pre-crRNA and tracrRNA of type II CRISPR loci if present in the organism. The polypeptide is Ribonuclease 3 2 (rnc2) (Nostoc sp. (strain PCC 7120 / SAG 25.82 / UTEX 2576)).